The sequence spans 426 residues: RuvB-like protein 1 (426 aa).

Residue 62–69 (GPVGSGKT) coordinates ATP.

This sequence belongs to the RuvB family. Component of the SWR1 chromatin remodeling complex, the INO80 chromatin remodeling complex, and of the R2TP complex.

The protein localises to the nucleus. The catalysed reaction is ATP + H2O = ADP + phosphate + H(+). Functionally, DNA helicase which participates in several chromatin remodeling complexes, including the SWR1 and the INO80 complexes. The SWR1 complex mediates the ATP-dependent exchange of histone H2A for the H2A variant HZT1 leading to transcriptional regulation of selected genes by chromatin remodeling. The INO80 complex remodels chromatin by shifting nucleosomes and is involved in DNA repair. Also involved in pre-rRNA processing. The polypeptide is RuvB-like protein 1 (RVB1) (Encephalitozoon cuniculi (strain GB-M1) (Microsporidian parasite)).